Consider the following 312-residue polypeptide: Zinc import ATP-binding protein ZnuC (312 aa).

An ABC transporter domain is found at Val-13–Arg-228. Gly-45–Ser-52 lines the ATP pocket. The segment at Asp-241–Ala-312 is disordered. Residues Thr-243–Ala-312 are compositionally biased toward basic and acidic residues.

The protein belongs to the ABC transporter superfamily. Zinc importer (TC 3.A.1.15.5) family. In terms of assembly, the complex is composed of two ATP-binding proteins (ZnuC), two transmembrane proteins (ZnuB) and a solute-binding protein (ZnuA).

It is found in the cell inner membrane. It carries out the reaction Zn(2+)(out) + ATP(in) + H2O(in) = Zn(2+)(in) + ADP(in) + phosphate(in) + H(+)(in). Its function is as follows. Part of the ABC transporter complex ZnuABC involved in zinc import. Responsible for energy coupling to the transport system. The chain is Zinc import ATP-binding protein ZnuC from Rhizobium etli (strain ATCC 51251 / DSM 11541 / JCM 21823 / NBRC 15573 / CFN 42).